A 342-amino-acid chain; its full sequence is Ketoreductase nvfG (342 aa).

This sequence belongs to the NAD(P)-dependent epimerase/dehydratase family. Dihydroflavonol-4-reductase subfamily.

The protein operates within secondary metabolite biosynthesis; terpenoid biosynthesis. In terms of biological role, ketoreductase; part of the gene cluster that mediates the biosynthesis of novofumigatonin, a heavily oxygenated meroterpenoid containing a unique orthoester moiety. The first step of the pathway is the synthesis of 3,5-dimethylorsellinic acid (DMOA) by the polyketide synthase nvfA via condensation of one acetyl-CoA starter unit with 3 malonyl-CoA units and 2 methylations. DMOA is then converted to farnesyl-DMOA by the farnesyltransferase nvfB. Epoxydation by FAD-dependent monooxygenase nvfK, followed by a protonation-initiated cyclization catalyzed by the terpene cyclase nvfL leads to the production of asnavolin H. The short chain dehydrogenase nvfC then as a 3-OH dehydrogenase of asnovolin H to yield chemesin D. There are two branches to synthesize asnovolin A from chemesin D. In one branch, chemesin D undergoes Baeyer-Villiger oxidation by nvfH, methylation by nvfJ, and enoyl reduction by the nvfM D enoylreductase that reduces the double bond between C-5'and C-6', to form respectively asnovolin I, asnovolin K, and asnovolin A. In the other branch, the methylation precedes the Baeyer-Villiger oxidation and the enoyl reduction to yield asnovolin A via the asnovolin J intermediate. Asnovolin A is further converted to fumigatonoid A by the Fe(II)/2-oxoglutarate-dependent dioxygenase nvfI that catalyzes an endoperoxidation reaction. The alpha/beta hydrolase nvfD then acts as an epimerase that converts fumigatonoid A to its C-5' epimer, which then undergoes spontaneous or nvfD-catalyzed lactonization. The following step utilizes the ketoreductase nvfG to produce fumigatonoid B. The dioxygenase nvfE further converts fumigatonoid B into fumigatonoid C. Finally the Fe(II)/2-oxoglutarate-dependent dioxygenase nvfF catalyzes two rounds of oxidation to transform fumigatonoid C into the end product, novofumigatonin A. This Aspergillus novofumigatus (strain IBT 16806) protein is Ketoreductase nvfG.